A 426-amino-acid chain; its full sequence is Mannose-6-phosphate isomerase (426 aa).

4 residues coordinate Zn(2+): Gln112, His114, Glu139, and His277. The active site involves Arg296.

It belongs to the mannose-6-phosphate isomerase type 1 family. Requires Zn(2+) as cofactor.

The protein localises to the cytoplasm. The catalysed reaction is D-mannose 6-phosphate = D-fructose 6-phosphate. It functions in the pathway nucleotide-sugar biosynthesis; GDP-alpha-D-mannose biosynthesis; alpha-D-mannose 1-phosphate from D-fructose 6-phosphate: step 1/2. Its function is as follows. Involved in the synthesis of the GDP-mannose and dolichol-phosphate-mannose required for a number of critical mannosyl transfer reactions. The chain is Mannose-6-phosphate isomerase (PMI40) from Ogataea parapolymorpha (strain ATCC 26012 / BCRC 20466 / JCM 22074 / NRRL Y-7560 / DL-1) (Yeast).